Reading from the N-terminus, the 490-residue chain is MNNFDTLLQSIARTTVVCVGDLMLDEFVYGEVSRISPEAPAPVIAVQRSEINVGGAGNVARNIAALGARCIFVGLIGDDEAGRTLNAELASEARIEPLLVCDPARPTTRKVRFVSEHFSTHMLRADWETAAAASAEIEQRLLDAILSQLERADIVLLSDYAKGVLTVRVIATVIEAARKLGKRVIVDPKSANFAIYRGATLLTPNRKEFVTATRCAADSMDEIATAAQEAIAFADCEAMLVTQSEHGMTLVPRAGEPIHVPAMPAKVRDVSGAGDTVAAVLAVALAAGADWGTAMRAASAAAAVAVSKNGTAVVTPAELRRKILPHASLAAEDKIIGSDAELDLRLAEWRRDGLRVGFTNGCFDILHPGHVKVLTAARGACDRLIVGLNSDASVRRLKGESRPVQNERARAEVLAALEAVDLVAIFEEDTPLKLITRIEPSVLVKGGDYTREQVVGHEIVAARGGEVLLIDVLPGFSTTSLVEKAREGTS.

Positions Met-1–Ala-330 are ribokinase. Asn-205–Glu-208 is an ATP binding site. Asp-275 is an active-site residue. The tract at residues Phe-358–Ser-490 is cytidylyltransferase.

This sequence in the N-terminal section; belongs to the carbohydrate kinase PfkB family. It in the C-terminal section; belongs to the cytidylyltransferase family. In terms of assembly, homodimer.

The catalysed reaction is D-glycero-beta-D-manno-heptose 7-phosphate + ATP = D-glycero-beta-D-manno-heptose 1,7-bisphosphate + ADP + H(+). The enzyme catalyses D-glycero-beta-D-manno-heptose 1-phosphate + ATP + H(+) = ADP-D-glycero-beta-D-manno-heptose + diphosphate. Its pathway is nucleotide-sugar biosynthesis; ADP-L-glycero-beta-D-manno-heptose biosynthesis; ADP-L-glycero-beta-D-manno-heptose from D-glycero-beta-D-manno-heptose 7-phosphate: step 1/4. It functions in the pathway nucleotide-sugar biosynthesis; ADP-L-glycero-beta-D-manno-heptose biosynthesis; ADP-L-glycero-beta-D-manno-heptose from D-glycero-beta-D-manno-heptose 7-phosphate: step 3/4. In terms of biological role, catalyzes the phosphorylation of D-glycero-D-manno-heptose 7-phosphate at the C-1 position to selectively form D-glycero-beta-D-manno-heptose-1,7-bisphosphate. Functionally, catalyzes the ADP transfer from ATP to D-glycero-beta-D-manno-heptose 1-phosphate, yielding ADP-D-glycero-beta-D-manno-heptose. This Rhodopseudomonas palustris (strain HaA2) protein is Bifunctional protein HldE.